Consider the following 104-residue polypeptide: Large ribosomal subunit protein bL21 (104 aa).

It belongs to the bacterial ribosomal protein bL21 family. Part of the 50S ribosomal subunit. Contacts protein L20.

In terms of biological role, this protein binds to 23S rRNA in the presence of protein L20. The chain is Large ribosomal subunit protein bL21 from Desulfosudis oleivorans (strain DSM 6200 / JCM 39069 / Hxd3) (Desulfococcus oleovorans).